The chain runs to 154 residues: Spore-associated protein A (154 aa).

The first 33 residues, 1-33 (MQAVGATLTAVGAIGAGLLVTAPAAGAATAGAT), serve as a signal peptide directing secretion.

The protein localises to the spore wall. This chain is Spore-associated protein A, found in Streptomyces coelicolor (strain ATCC BAA-471 / A3(2) / M145).